Reading from the N-terminus, the 1020-residue chain is MFGFLKKIFGSAHDRLLNRYRKQVEEVNKWDQKFQSLSDEQLKAKTAEFRLRLKNGEMLDQLLPEAYAVVKAVCRRLNGTEIHVSGYNQRWDMVPYDVQVLGGIAMHNGAIAEMHTGEGKTLTAVMPLYLNALTGKPVHLITVNDYLAQRDCEWVGTVLRWLGLTTGALTNSVAIEKRKEIYESDVVYGTASEFGFDYLRDNSMAMSKEDQVQRGYYFAIIDEVDSILIDEARTPLIISGPVPDSRQMYDELKEGVAELVRRQRDLCNRLASDARKVVEEVEALGSGKKDKKLEESEQEAYRKLWLVGKGTPQNKILKRLKENPDIRAAIDKWDLYYHAEQNKEERTQTLAELYMIIDEKGNEYELTDKGINAWQTYTNGIGSPEDFIMMDIGDEYIKVDEDLSLDAESKMARKMQIKEEDAKRKERAHNLRQLLRAHLLMEKDVDYIIHDNKIVIIDENTGRPQPGRRFSDGLHQAIEAKEGVEIQKETQTYATITLQNFFRMYEKLSGMTGTATTEANEFKEIYKLDVLEIPTHRANRRVDFNDEIYMTEREKYNAILKEVREVHEKERPILIGTESVEVSEKLSRIFKQNGLEHTVLNAKQNEREAEIIAEAGKRAAITIATNMAGRGTDIKLEPGVADLGGLYVMGTTRHQSRRTDRQLRGRCARQGDPGNSKFYISFEDALLRLFASPRITSVLQKFRPPEGEPISAGMLNKSIETAQKRVEQRNYTMRKHTLEYDDVMNKQRQEIYAFRNEILGVGNIEPVAIEIIESVCSMGADQFFKSRSEEGGWNPEGYRQWLLHLFPVTFDEYFFDKEHLEIEEIEQMAADKVVEALKEKIASENAKVPGHLIAMGESPFPAHTAIRNLMIRKTDQMWQEHLLRMDHLRSDVTLRAVGQRDPLTEFKHEAFALFDELSRNLRTEVARSMFRFEIIAPQQTLEQLLQSGLRLETNRSLFVDLQNEQPSQEMAADEETQEESKIEENKPEPIVVGPRVGRNDLCPCGSGKKFKKCCNKVEIV.

Residues Gln-99, 117–121 (GEGKT), and Asp-633 contribute to the ATP site. The interval 963–992 (NEQPSQEMAADEETQEESKIEENKPEPIVV) is disordered. Residues 978 to 987 (EESKIEENKP) show a composition bias toward basic and acidic residues. Zn(2+)-binding residues include Cys-1002, Cys-1004, Cys-1013, and Cys-1014.

The protein belongs to the SecA family. Monomer and homodimer. Part of the essential Sec protein translocation apparatus which comprises SecA, SecYEG and auxiliary proteins SecDF. Other proteins may also be involved. Zn(2+) is required as a cofactor.

The protein resides in the cell inner membrane. The protein localises to the cytoplasm. It catalyses the reaction ATP + H2O + cellular proteinSide 1 = ADP + phosphate + cellular proteinSide 2.. Its function is as follows. Part of the Sec protein translocase complex. Interacts with the SecYEG preprotein conducting channel. Has a central role in coupling the hydrolysis of ATP to the transfer of proteins into and across the cell membrane, serving as an ATP-driven molecular motor driving the stepwise translocation of polypeptide chains across the membrane. This chain is Protein translocase subunit SecA, found in Protochlamydia amoebophila (strain UWE25).